The sequence spans 125 residues: Small ribosomal subunit protein uS12 (125 aa).

At Asp89 the chain carries 3-methylthioaspartic acid. The segment at 106–125 (GVKDRKQSRSKYGAKRPKKA) is disordered. Over residues 113–125 (SRSKYGAKRPKKA) the composition is skewed to basic residues.

The protein belongs to the universal ribosomal protein uS12 family. In terms of assembly, part of the 30S ribosomal subunit. Contacts proteins S8 and S17. May interact with IF1 in the 30S initiation complex.

With S4 and S5 plays an important role in translational accuracy. Functionally, interacts with and stabilizes bases of the 16S rRNA that are involved in tRNA selection in the A site and with the mRNA backbone. Located at the interface of the 30S and 50S subunits, it traverses the body of the 30S subunit contacting proteins on the other side and probably holding the rRNA structure together. The combined cluster of proteins S8, S12 and S17 appears to hold together the shoulder and platform of the 30S subunit. This Aromatoleum aromaticum (strain DSM 19018 / LMG 30748 / EbN1) (Azoarcus sp. (strain EbN1)) protein is Small ribosomal subunit protein uS12.